The primary structure comprises 188 residues: Threonylcarbamoyl-AMP synthase (188 aa).

The YrdC-like domain occupies 8–188; that stretch reads EGAQPGLHAY…DLATGKILRA (181 aa).

Belongs to the SUA5 family. TsaC subfamily.

Its subcellular location is the cytoplasm. The catalysed reaction is L-threonine + hydrogencarbonate + ATP = L-threonylcarbamoyladenylate + diphosphate + H2O. Functionally, required for the formation of a threonylcarbamoyl group on adenosine at position 37 (t(6)A37) in tRNAs that read codons beginning with adenine. Catalyzes the conversion of L-threonine, HCO(3)(-)/CO(2) and ATP to give threonylcarbamoyl-AMP (TC-AMP) as the acyladenylate intermediate, with the release of diphosphate. This Thiobacillus denitrificans (strain ATCC 25259 / T1) protein is Threonylcarbamoyl-AMP synthase.